Consider the following 364-residue polypeptide: Phosrestin-2 (364 aa).

It belongs to the arrestin family. Phosphorylated, but does not undergo light-induced phosphorylation. Expressed specifically and abundantly in photoreceptor cells in retina and ocelli.

The protein localises to the cell projection. It localises to the rhabdomere. Its function is as follows. Regulates photoreceptor cell deactivation. Arr1 and Arr2 proteins are mediators of rhodopsin inactivation and are essential for the termination of the phototransduction cascade. Involved in regulating normal cycles of per nuclear accumulation in brain circadian neurons and thus is important for normal circadian behavior. In the dark, functions with Arr2 to promote the formation of cytosolic Bdbt foci, which are required for dco localization to photoreceptor nuclei where it phosphorylates and activates degradation of per. This is Phosrestin-2 (Arr1) from Drosophila melanogaster (Fruit fly).